Reading from the N-terminus, the 293-residue chain is Shikimate dehydrogenase (NADP(+)) (293 aa).

Residues 26 to 28 (SKS) and threonine 73 each bind shikimate. Residue lysine 77 is the Proton acceptor of the active site. NADP(+) is bound at residue aspartate 89. The shikimate site is built by asparagine 98 and aspartate 113. Residues 137 to 141 (GAGGA), 161 to 166 (NRTKQR), and isoleucine 231 contribute to the NADP(+) site. A shikimate-binding site is contributed by tyrosine 233. NADP(+) is bound at residue glycine 254.

Belongs to the shikimate dehydrogenase family. As to quaternary structure, homodimer.

The enzyme catalyses shikimate + NADP(+) = 3-dehydroshikimate + NADPH + H(+). It participates in metabolic intermediate biosynthesis; chorismate biosynthesis; chorismate from D-erythrose 4-phosphate and phosphoenolpyruvate: step 4/7. Functionally, involved in the biosynthesis of the chorismate, which leads to the biosynthesis of aromatic amino acids. Catalyzes the reversible NADPH linked reduction of 3-dehydroshikimate (DHSA) to yield shikimate (SA). This Bartonella henselae (strain ATCC 49882 / DSM 28221 / CCUG 30454 / Houston 1) (Rochalimaea henselae) protein is Shikimate dehydrogenase (NADP(+)).